A 56-amino-acid polypeptide reads, in one-letter code: ComX pheromone (56 aa).

The propeptide occupies 1–50 (MMQDLINYFLSYPEVLKKLKNREACLIGFSSNETETIIKAYNDYHLSSPT). Position 54 is a tryptophan derivative (Trp-54). Trp-54 carries 3'-farnesyl-2',N2-cyclotryptophan lipidation.

Interacts directly with the sensor histidine kinase ComP and stimulates its activity. Post-translationally, trp-54 is modified by farnesylation, which is essential for activity. Modified by the tryptophan prenyltransferase ComQ before export to the extracellular environment. The type of isoprenyl derivative differs among the different pherotypes and depends on ComX primary sequence.

The protein localises to the secreted. Functionally, part of a major quorum-sensing system that regulates the development of genetic competence. Acts through the activation of the two-component regulatory system ComP/ComA composed of a sensor histidine kinase, ComP, and a response regulator, ComA. The sequence is that of ComX pheromone from Bacillus mojavensis.